Here is a 146-residue protein sequence, read N- to C-terminus: Snaclec anticoagulant protein subunit B (146 aa).

A signal peptide spans 1-23; the sequence is MGRFIFVSFGLLVLFLSLSGTAA. The 123-residue stretch at 24 to 146 folds into the C-type lectin domain; the sequence is DCPSDWSSYE…IANFVCEFQA (123 aa). Intrachain disulfides connect Cys25/Cys36, Cys53/Cys142, and Cys119/Cys134. Residues Ser64, Gln66, and Glu70 each coordinate Ca(2+). Glu143 lines the Ca(2+) pocket.

The protein belongs to the snaclec family. As to quaternary structure, heterodimer with subunit A of agkisacutacin or AaACP; disulfide-linked. Expressed by the venom gland.

The protein localises to the secreted. Anticoagulant protein which binds to the gamma-carboxyglutamic acid-domain regions of factors IX and factor X in the presence of calcium with a 1 to 1 stoichiometry. Also inhibits platelet aggregation by binding to platelet glycoprotein Ibalpha (GP1BA) and functioning as a blocker of vWF. Is devoid of hemorrhagic and lethal activities. Possesses antithrombotic and thrombolytic activities. Also hydrolyzes the Aalpha-chain of fibrinogen. Does not affect the Bbeta-chain and the gamma chain. The chain is Snaclec anticoagulant protein subunit B from Deinagkistrodon acutus (Hundred-pace snake).